A 129-amino-acid polypeptide reads, in one-letter code: Small ribosomal subunit protein uS11 (129 aa).

It belongs to the universal ribosomal protein uS11 family. As to quaternary structure, part of the 30S ribosomal subunit. Interacts with proteins S7 and S18. Binds to IF-3.

Functionally, located on the platform of the 30S subunit, it bridges several disparate RNA helices of the 16S rRNA. Forms part of the Shine-Dalgarno cleft in the 70S ribosome. The protein is Small ribosomal subunit protein uS11 of Lactiplantibacillus plantarum (strain ATCC BAA-793 / NCIMB 8826 / WCFS1) (Lactobacillus plantarum).